The following is a 296-amino-acid chain: Probable cell wall protein PGA41 (296 aa).

The first 18 residues, 1-18, serve as a signal peptide directing secretion; that stretch reads MKFTIVLFTLISVTVAAA. Low complexity predominate over residues 146–212; the sequence is IASSTKESSS…ITTISSDSST (67 aa). Residues 146–276 form a disordered region; the sequence is IASSTKESSS…PNSSQTAPGA (131 aa). The span at 220–245 shows a compositional bias: gly residues; that stretch reads QGGGGNSGNNGSNGDGGNDASGGGGV. N-linked (GlcNAc...) asparagine glycans are attached at residues Asn-229 and Asn-268. Low complexity predominate over residues 247 to 274; sequence NENEQASSPPSSQSSTNSNQPNSSQTAP. The GPI-anchor amidated glycine moiety is linked to residue Gly-275. A propeptide spans 276–296 (removed in mature form); the sequence is AANYLSSVSVGTLMILVLGLI.

It belongs to the IHD1 family. The GPI-anchor is attached to the protein in the endoplasmic reticulum and serves to target the protein to the cell surface. There, the glucosamine-inositol phospholipid moiety is cleaved off and the GPI-modified mannoprotein is covalently attached via its lipidless GPI glycan remnant to the 1,6-beta-glucan of the outer cell wall layer.

It localises to the secreted. The protein resides in the cell wall. It is found in the membrane. Its function is as follows. Probable GPI-anchored cell wall protein that may be involved in cell wall organization, hyphal growth, as well as in virulence. In Candida albicans (strain SC5314 / ATCC MYA-2876) (Yeast), this protein is Probable cell wall protein PGA41 (PGA41).